Consider the following 182-residue polypeptide: Hypoxanthine/guanine phosphoribosyltransferase (182 aa).

It belongs to the purine/pyrimidine phosphoribosyltransferase family. Archaeal HPRT subfamily. In terms of assembly, homodimer.

It localises to the cytoplasm. It catalyses the reaction IMP + diphosphate = hypoxanthine + 5-phospho-alpha-D-ribose 1-diphosphate. The enzyme catalyses GMP + diphosphate = guanine + 5-phospho-alpha-D-ribose 1-diphosphate. It participates in purine metabolism; IMP biosynthesis via salvage pathway; IMP from hypoxanthine: step 1/1. In terms of biological role, catalyzes a salvage reaction resulting in the formation of IMP that is energically less costly than de novo synthesis. This Methanosphaerula palustris (strain ATCC BAA-1556 / DSM 19958 / E1-9c) protein is Hypoxanthine/guanine phosphoribosyltransferase.